A 172-amino-acid chain; its full sequence is Neuropeptide-like protein nlp-8 (172 aa).

The N-terminal stretch at 1-26 (MSQKLLPISPLQLLFLQCLLIGFTAA) is a signal peptide.

Post-translationally, may be processed by convertase egl-3.

The protein localises to the secreted. Neuropeptide-like protein. Plays a role in behaviors associated with a sleep-like state induced by stress (SIS), acting in concert with the FARP (FMRFamide related) peptides, flp-13 and flp-24. The sequence is that of Neuropeptide-like protein nlp-8 from Caenorhabditis elegans.